Consider the following 172-residue polypeptide: Probable metallophosphoesterase MTH_1774 (172 aa).

A divalent metal cation is bound by residues Asp-8, His-10, Asp-37, Asn-59, His-85, His-113, and His-115.

It belongs to the metallophosphoesterase superfamily. YfcE family. It depends on a divalent metal cation as a cofactor.

This Methanothermobacter thermautotrophicus (strain ATCC 29096 / DSM 1053 / JCM 10044 / NBRC 100330 / Delta H) (Methanobacterium thermoautotrophicum) protein is Probable metallophosphoesterase MTH_1774.